The primary structure comprises 677 residues: MAQATISITVNGEAKEVEATTTGVELFAEDKNIIAVKINGENRDLYTPLNDGDTVDPIALDSEDGLAIMRHSATHVMAQAVQEVYPNAKLGVGPVIKDGFYYDFQVDQPFTPNDLKDIEKRMQRIIKSSQSFRRRSVTEEEALKEEADQPFKIELIEDKEAHLDPAAATEISEKELSFYDNVDRDGNVVWKDLCRGPHLPNTRYIKAFKIERSAAAYWRGSEKNPTMQRVYGTAWATKEDLKAYQTRLEEAAKRDHRKLGAEMDLFSFPDEIGPGLAVFHPKGAAVINAMEDYSREMHRKHHYSFVQTPHITKGGLYETSGHLHWYKDGMYPPMHLDEEKDADGNITKPGADYYLKPMNCPMHNLIFKSRQRSYRELPLRLFEFGTVYRYEKSGEVHGLTRVRGLTQDDSHIYCTREQMKDELTSLLTFVLNLLKDFGLTDFYLELSTKDPNKYVGSDEIWEEATNTLAEVAKESNLELVDDPCGAAFYGPKISVQARDAIGRTWQVSTIQLDFNLPERFQLEYIAKDGTHQRPVMIHRALFGSIERFFAVLLEHYAGAFPAWLAPVQVLGVPVADEFAPHLAGFVKSLEDEMVRCEIDYSDDRFGKKIRNASKSKVPFILIVGEEDMNNNAVSFRFRDGSQLNGVPVDTAREQILTVIKKRVQVNSADDFNAAVAE.

The 59-residue stretch at 1-59 (MAQATISITVNGEAKEVEATTTGVELFAEDKNIIAVKINGENRDLYTPLNDGDTVDPIA) folds into the TGS domain. Residues 255 to 561 (DHRKLGAEMD…LLEHYAGAFP (307 aa)) form a catalytic region. Zn(2+) contacts are provided by C360, H411, and H538.

This sequence belongs to the class-II aminoacyl-tRNA synthetase family. As to quaternary structure, homodimer. Requires Zn(2+) as cofactor.

It localises to the cytoplasm. The catalysed reaction is tRNA(Thr) + L-threonine + ATP = L-threonyl-tRNA(Thr) + AMP + diphosphate + H(+). Catalyzes the attachment of threonine to tRNA(Thr) in a two-step reaction: L-threonine is first activated by ATP to form Thr-AMP and then transferred to the acceptor end of tRNA(Thr). Also edits incorrectly charged L-seryl-tRNA(Thr). The polypeptide is Threonine--tRNA ligase (Bifidobacterium longum (strain NCC 2705)).